We begin with the raw amino-acid sequence, 429 residues long: Serine--tRNA ligase (429 aa).

229 to 231 (TAE) contacts L-serine. 260-262 (RSE) provides a ligand contact to ATP. L-serine is bound at residue E283. ATP is bound at residue 347–350 (EISS). S383 contributes to the L-serine binding site.

The protein belongs to the class-II aminoacyl-tRNA synthetase family. Type-1 seryl-tRNA synthetase subfamily. In terms of assembly, homodimer. The tRNA molecule binds across the dimer.

The protein localises to the cytoplasm. It carries out the reaction tRNA(Ser) + L-serine + ATP = L-seryl-tRNA(Ser) + AMP + diphosphate + H(+). The catalysed reaction is tRNA(Sec) + L-serine + ATP = L-seryl-tRNA(Sec) + AMP + diphosphate + H(+). Its pathway is aminoacyl-tRNA biosynthesis; selenocysteinyl-tRNA(Sec) biosynthesis; L-seryl-tRNA(Sec) from L-serine and tRNA(Sec): step 1/1. Catalyzes the attachment of serine to tRNA(Ser). Is also able to aminoacylate tRNA(Sec) with serine, to form the misacylated tRNA L-seryl-tRNA(Sec), which will be further converted into selenocysteinyl-tRNA(Sec). The polypeptide is Serine--tRNA ligase (Orientia tsutsugamushi (strain Boryong) (Rickettsia tsutsugamushi)).